Reading from the N-terminus, the 311-residue chain is 4-hydroxyproline 2-epimerase (311 aa).

Cys-89 functions as the Proton acceptor in the catalytic mechanism. Residues 90 to 91 (GH), His-209, and Asp-233 each bind substrate. The Proton donor role is filled by Cys-237. 238-239 (GT) contacts substrate.

The protein belongs to the proline racemase family.

It catalyses the reaction trans-4-hydroxy-L-proline = cis-4-hydroxy-D-proline. In terms of biological role, catalyzes the epimerization of trans-4-hydroxy-L-proline (t4LHyp) to cis-4-hydroxy-D-proline (c4DHyp). Is likely involved in a degradation pathway that converts t4LHyp to alpha-ketoglutarate. Displays no proline racemase activity. This is 4-hydroxyproline 2-epimerase from Burkholderia ambifaria (strain ATCC BAA-244 / DSM 16087 / CCUG 44356 / LMG 19182 / AMMD) (Burkholderia cepacia (strain AMMD)).